A 373-amino-acid chain; its full sequence is Innexin shaking-B (373 aa).

Topologically, residues 1–21 (MLDIFRGLKSLVKISHVNTDS) are cytoplasmic. The helical transmembrane segment at 22-42 (PVFRLHYSITVIILMSFSLIV) threads the bilayer. Over 43-106 (TTRQYVGNPI…SAEATAADKK (64 aa)) the chain is Extracellular. A helical transmembrane segment spans residues 107–127 (IYKYYQWVCFCLFFQAILFYT). At 128–176 (PRWLWKSWEGGKIHALMMDLDIGICSEIEKKQKKKLLLDYLWDNLRYHN) the chain is on the cytoplasmic side. A helical transmembrane segment spans residues 177 to 199 (WWAYRYYVCEFLSLCNVIGQMFL). The Extracellular segment spans residues 200–268 (MNRFFDGEFM…ILPLNVVNEK (69 aa)). A helical membrane pass occupies residues 269-289 (IYIFLWFWFIILTILTTLTIF). Residues 290–373 (YRIIIIFSPR…PGMKGEIQDA (84 aa)) are Cytoplasmic-facing.

Belongs to the pannexin family. In terms of assembly, monomer.

The protein localises to the cell membrane. It localises to the cell junction. The protein resides in the gap junction. Its function is as follows. Structural component of the gap junctions at electrical synapses in distal and mid-depth levels in the lamina. This chain is Innexin shaking-B, found in Anopheles gambiae (African malaria mosquito).